We begin with the raw amino-acid sequence, 785 residues long: (+)-copalyl diphosphate synthase 3, chloroplastic (785 aa).

K238 provides a ligand contact to substrate. The Mg(2+) site is built by D371 and D373. The DXDD motif motif lies at D371–D374. Residue K457 coordinates substrate.

The protein belongs to the terpene synthase family. Requires Mg(2+) as cofactor. Present in both leaves and flowers, with higher levels in leaves.

Its subcellular location is the plastid. It is found in the chloroplast. It carries out the reaction (2E,6E,10E)-geranylgeranyl diphosphate = (+)-copalyl diphosphate. It participates in secondary metabolite biosynthesis; terpenoid biosynthesis. Functionally, involved in the biosynthesis of labdane-type diterpenoid including marrubiin and other labdane-related furanoid diterpenoids with potential applications as anti-diabetics, analgesics or vasorelaxants. Terpene synthase that produces (+)-copalyl diphosphate ((+)-CPP) from geranylgeranyl diphosphate (GGPP). In Marrubium vulgare (White horehound), this protein is (+)-copalyl diphosphate synthase 3, chloroplastic.